The chain runs to 178 residues: Aspartate carbamoyltransferase regulatory chain (178 aa).

A compositionally biased stretch (basic and acidic residues) spans methionine 1–valine 15. Residues methionine 1–arginine 23 are disordered. Residues cysteine 133, cysteine 138, cysteine 159, and cysteine 162 each coordinate Zn(2+).

The protein belongs to the PyrI family. Contains catalytic and regulatory chains. It depends on Zn(2+) as a cofactor.

Functionally, involved in allosteric regulation of aspartate carbamoyltransferase. The protein is Aspartate carbamoyltransferase regulatory chain of Haloquadratum walsbyi (strain DSM 16790 / HBSQ001).